Reading from the N-terminus, the 2358-residue chain is MRNKNILVLNLILSIPRLVFTAKYDERESLWNLNQNQSATDPLDYWGKWENHQYHPSPDDWQVPFYTVILDKWKDGDPRNNEANNTIYEYDIYETGFRNGGDIIGLKDSLDYLEIMGIKVIYIAGTPFLNQPWGADQYSPLDYTILDHHSGTIAQWRDTIEEIHRRGFYLVLDLTISTLGDLIGFRKYLNSTTPFSLFEHEAVWKSNVIYPDWNFTNKYDPKCELPRFWGEDGAPVVIDYVGCYDSDFDQYGDTEAFGTHPDWERQLSKFASVQDRLREWRPSVSEKLKHFACMIIAMLDVDGFRIDKATQITVDFLASWAHSVRGCAATFNKKNFFIPGEVTGSSSYGSIYYGRGRQPDQRPPSILTSLNSSSLKENYFLREPKANALDASAFHYSLYRAMTRFLQMDGDLQVGHDLPVDFTDLWNAMAVNEDFYNPNTHKVDPRHMLGITNHDVFRWSAIEFGLERLLLGTMITYFLFPGAPSIYYGDEQGFYVLDNTANNYLYGRQAMPSSIAWKVHGCYALASDQYPELPVIKAYQGCNDDWNIMDHFDFAKPELKMFKIFNFIREQYPALKSGWKSVKLRNWTEYVHFPNSGKTPTEVGVWSIVRGALETLQNFDARNNTAWNGDIWILYTNQNRTTTLDYQCSSSNSVVSPYASGLTLKNLIYPFEEYILQESNKYSSNLKSYYGCIPNIEFPPWGFKILIPKKYYVRYPPQITSFNPQHDSRIYNHNGKQKLVISFTETMDCNEITSKLQFSSKTESGKVMKVDKETVKCSVSNNSADSYYFGLAPARFHWSGDLINIADGIHEIKLQRVHSQDHQSMSDSMYKLLLRFGKLDNPMVFSTANRSSSILSQENEKLYINHKAPGADLFRFSFDYGLHWSEWIDYLSNKTECTEFANNISLKTWKGHHVIVQYWSRLTASANYIQEGGLGSLSSFPHLYMNGPYNQWGFDSGIPNRLIYKNCSWHKTFISDVFPTKFQFNVYNFDESGMPDQKKVYGTIGNSTVLVRLPPSELKESVTWIKEAPPSNFLTWEIIISDLTRTYHLIPRGSSTVSIILFSLFLVSPLICALATMLAFQKFFYQVRLNKGIEKKQEWKEKLLGPFSRISQSNINQGFSHQVALNNSVKSVHPKISRKLILVATLEYDIPDWDIKIKIGGLGVMAELMGKHLTHHDLIWVVPRVGDVNYPDGQELAPLEVVVLDQVYEVRVYSHNLRNITYILLEAPVFRKQTSAEPYPARMDDLSSAIFYSAWNQCIAGIIRRYPIDVYHINDYHGALAPCYLLPNVIPCVLSLHNAEFQGLWPLRTQAEKNEVCAVYNISTKICTKYIQFGNVFNLLHAGVSYIRIHQKGYGVVGVSNKYGKRSKARYPIFWGLKKVGKLPNPDPLDTAQLDDPTNITEEITIDLTAEAEKRAFKRDAQKWTNLELDDSADLLVFVGRWSMQKGIDLIADIAPTLLQDFNAQLITIGPIIDLYGKFAAEKLNALMKKYPKRVYCRPEFTHLPPCIFSGADFVLIPSRDEPFGLVAVEFGRKGALGIGARVGGLGQMPGWWYSVESNATSHVLQQFEEACRKALSSSAEKRALLRAKSAKQRFPVLEWISKLDHLMDNCIRLNVGQRQQGSSSHSMKFRSKNDLSSIKLSTKEGLENEENELKDKAPPNEPNVGSLFLFNKSSMGSVGGPGHYKATDLSQELETNDQDIEYNEFYSQLDTSTSDIFQDTSVDGFPDLQVSSDINVRNDRLSSFVMSSEDLRSSDGHPENSDSVLETISSVHHRSPINQVVRNLNESQLSLDSVISMNLNKEFALTKTENDFTDDNGRALNYFSQKLEELDPKNSVNELCIETFILKMKKEWYDGLRNIRFGIQRPNLLIYDEDKKFINTEHFLGSKVNLNSVTSLGNFNGSSPNSFLFLLKNRTMRIKCFMQMRIGDWPVYSIFLSVGQILAATSYQLVLLSGSSAQFSTQLYIVGSIYTVSSVFWWYLYRMLPSVASLSLPFLLYCASFLLIGISSFINENMYLRLWISHIASWIYAVASASGSLYFSLNFGDEAGAGVVSWIVRACIVQGFQQIWACCLWYWGSYIDRSMQECHSFPHEVYPLGLIAVFSWPLALVMLLFAILLIFGLPDYYWESPGNIPAFYTALLRRKLVLWFFVATILQNYWLSTLYGRSWKYLWGGSLLAPWKMLTIAFFLFLSMWIIMLMFLGRKSLTHSWLLPVFGVGLGSPRWLQMMWGTSNIGVYLPWAGVAGPIVGRILWIWLGVLDSVQGVGVGMILLQTLTRRHIATTLIAGQIIGTLTSMLARATAPNRLGPGLVFLDLTSWRFEDGAKIFRSAPFWICLISQIAVSAGYLLFFRRENLSRP.

Residues E1645–P1659 show a composition bias toward basic and acidic residues. A disordered region spans residues E1645 to F1669.

Belongs to the glycosyltransferase group 1 family.

The enzyme catalyses [(1-&gt;3)-alpha-D-glucosyl](n) + UDP-alpha-D-glucose = [(1-&gt;3)-alpha-D-glucosyl](n+1) + UDP + H(+). The polypeptide is Cell wall alpha-1,3-glucan synthase mok13 (mok13) (Schizosaccharomyces pombe (strain 972 / ATCC 24843) (Fission yeast)).